A 339-amino-acid polypeptide reads, in one-letter code: Aspartate carbamoyltransferase catalytic subunit (339 aa).

Carbamoyl phosphate contacts are provided by Arg-59 and Thr-60. Lys-87 is a binding site for L-aspartate. Residues Arg-109, His-142, and Gln-145 each contribute to the carbamoyl phosphate site. L-aspartate is bound by residues Arg-182 and Arg-253. Carbamoyl phosphate-binding residues include Gly-294 and Pro-295.

The protein belongs to the aspartate/ornithine carbamoyltransferase superfamily. ATCase family. Heterododecamer (2C3:3R2) of six catalytic PyrB chains organized as two trimers (C3), and six regulatory PyrI chains organized as three dimers (R2).

It carries out the reaction carbamoyl phosphate + L-aspartate = N-carbamoyl-L-aspartate + phosphate + H(+). It functions in the pathway pyrimidine metabolism; UMP biosynthesis via de novo pathway; (S)-dihydroorotate from bicarbonate: step 2/3. Functionally, catalyzes the condensation of carbamoyl phosphate and aspartate to form carbamoyl aspartate and inorganic phosphate, the committed step in the de novo pyrimidine nucleotide biosynthesis pathway. This Prochlorococcus marinus (strain NATL2A) protein is Aspartate carbamoyltransferase catalytic subunit.